The chain runs to 364 residues: Medium-wave-sensitive opsin 2 (364 aa).

Residues 1-23 (MAQQWSLQRLAGRHPQDSYEDST) are disordered. Residues 1–52 (MAQQWSLQRLAGRHPQDSYEDSTQSSIFTYTNSNSTRGPFEGPNYHIAPRWV) are Extracellular-facing. Residues 17–43 (DSYEDSTQSSIFTYTNSNSTRGPFEGP) are required for 11-cis-retinal regeneration. A glycan (N-linked (GlcNAc...) asparagine) is linked at Asn-34. A helical membrane pass occupies residues 53 to 77 (YHLTSVWMIFVVIASVFTNGLVLAA). Over 78–89 (TMKFKKLRHPLN) the chain is Cytoplasmic. A helical membrane pass occupies residues 90–115 (WILVNLAVADLAETVIASTISVVNQV). The Extracellular segment spans residues 116–129 (YGYFVLGHPMCVLE). A disulfide bond links Cys-126 and Cys-203. The chain crosses the membrane as a helical span at residues 130–149 (GYTVSLCGITGLWSLAIISW). Residues 150 to 168 (ERWMVVCKPFGNVRFDAKL) are Cytoplasmic-facing. The chain crosses the membrane as a helical span at residues 169-192 (AIVGIAFSWIWAAVWTAPPIFGWS). The Extracellular segment spans residues 193-218 (RYWPHGLKTSCGPDVFSGSSYPGVQS). The helical transmembrane segment at 219–246 (YMIVLMVTCCITPLSIIVLCYLQVWLAI) threads the bilayer. Topologically, residues 247-268 (RAVAKQQKESESTQKAEKEVTR) are cytoplasmic. Residues 269 to 292 (MVVVMVLAFCFCWGPYAFFACFAA) form a helical membrane-spanning segment. Over 293-300 (ANPGYPFH) the chain is Extracellular. The helical transmembrane segment at 301–325 (PLMAALPAFFAKSATIYNPVIYVFM) threads the bilayer. Lys-312 bears the N6-(retinylidene)lysine mark. At 326–364 (NRQFRNCILQLFGKKVDDGSELSSASKTEVSSVSSVSPA) the chain is on the cytoplasmic side.

The protein belongs to the G-protein coupled receptor 1 family. Opsin subfamily. Post-translationally, N-glycosylated. O-glycosylated. Phosphorylated on some or all of the serine and threonine residues present in the C-terminal region.

The protein localises to the cell membrane. In terms of biological role, visual pigments are the light-absorbing molecules that mediate vision. They consist of an apoprotein, opsin, covalently linked to cis-retinal. This Homo sapiens (Human) protein is Medium-wave-sensitive opsin 2.